The chain runs to 28 residues: Beta-bungarotoxin B chain-like (28 aa).

Positions M1–S24 are cleaved as a signal peptide.

In terms of assembly, heterodimer; disulfide-linked. The A chains have phospholipase A2 activity and the B chains show homology with the basic protease inhibitors. In terms of tissue distribution, expressed by the venom gland.

The protein resides in the secreted. Its function is as follows. Beta-1-bungarotoxin is a presynaptic neurotoxin of the venom. The B chain is homologous to venom basic protease inhibitors but has no protease inhibitor activity and blocks voltage-gated potassium channels (Kv). The chain is Beta-bungarotoxin B chain-like from Bungarus multicinctus (Many-banded krait).